We begin with the raw amino-acid sequence, 543 residues long: CTP synthase (543 aa).

The segment at 1–265 (MARYIFITGG…DDEVLAAFGI (265 aa)) is amidoligase domain. A CTP-binding site is contributed by serine 13. Serine 13 contacts UTP. 14 to 19 (SLGKGL) contacts ATP. Tyrosine 54 contributes to the L-glutamine binding site. Residue aspartate 71 participates in ATP binding. Mg(2+) contacts are provided by aspartate 71 and glutamate 139. CTP contacts are provided by residues 146 to 148 (DIE), 186 to 191 (KTKPTQ), and lysine 222. UTP is bound by residues 186-191 (KTKPTQ) and lysine 222. Residue 238 to 240 (RDA) coordinates ATP. The Glutamine amidotransferase type-1 domain maps to 291 to 542 (TIAIVGKYTG…IQAAVVQSRL (252 aa)). Glycine 353 is a binding site for L-glutamine. Cysteine 380 functions as the Nucleophile; for glutamine hydrolysis in the catalytic mechanism. L-glutamine is bound by residues 381 to 384 (FGMQ), glutamate 404, and arginine 470. Residues histidine 515 and glutamate 517 contribute to the active site.

Belongs to the CTP synthase family. In terms of assembly, homotetramer.

It catalyses the reaction UTP + L-glutamine + ATP + H2O = CTP + L-glutamate + ADP + phosphate + 2 H(+). The catalysed reaction is L-glutamine + H2O = L-glutamate + NH4(+). The enzyme catalyses UTP + NH4(+) + ATP = CTP + ADP + phosphate + 2 H(+). It participates in pyrimidine metabolism; CTP biosynthesis via de novo pathway; CTP from UDP: step 2/2. With respect to regulation, allosterically activated by GTP, when glutamine is the substrate; GTP has no effect on the reaction when ammonia is the substrate. The allosteric effector GTP functions by stabilizing the protein conformation that binds the tetrahedral intermediate(s) formed during glutamine hydrolysis. Inhibited by the product CTP, via allosteric rather than competitive inhibition. Its function is as follows. Catalyzes the ATP-dependent amination of UTP to CTP with either L-glutamine or ammonia as the source of nitrogen. Regulates intracellular CTP levels through interactions with the four ribonucleotide triphosphates. This chain is CTP synthase, found in Nitrobacter winogradskyi (strain ATCC 25391 / DSM 10237 / CIP 104748 / NCIMB 11846 / Nb-255).